The primary structure comprises 282 residues: Bifunctional protein FolD (282 aa).

NADP(+) is bound by residues N165–S167, S190, and I231.

This sequence belongs to the tetrahydrofolate dehydrogenase/cyclohydrolase family. Homodimer.

The enzyme catalyses (6R)-5,10-methylene-5,6,7,8-tetrahydrofolate + NADP(+) = (6R)-5,10-methenyltetrahydrofolate + NADPH. It catalyses the reaction (6R)-5,10-methenyltetrahydrofolate + H2O = (6R)-10-formyltetrahydrofolate + H(+). It functions in the pathway one-carbon metabolism; tetrahydrofolate interconversion. In terms of biological role, catalyzes the oxidation of 5,10-methylenetetrahydrofolate to 5,10-methenyltetrahydrofolate and then the hydrolysis of 5,10-methenyltetrahydrofolate to 10-formyltetrahydrofolate. In Clostridium botulinum (strain ATCC 19397 / Type A), this protein is Bifunctional protein FolD.